The sequence spans 476 residues: Bifunctional protein HldE (476 aa).

A ribokinase region spans residues 1–318 (MKVTLPDFRR…ENAIRGRAET (318 aa)). 195-198 (NLSE) contacts ATP. Residue D264 is part of the active site. The interval 344-476 (MTNGIFDILH…IIQSIKNGLG (133 aa)) is cytidylyltransferase.

This sequence in the N-terminal section; belongs to the carbohydrate kinase PfkB family. It in the C-terminal section; belongs to the cytidylyltransferase family. Homodimer.

It catalyses the reaction D-glycero-beta-D-manno-heptose 7-phosphate + ATP = D-glycero-beta-D-manno-heptose 1,7-bisphosphate + ADP + H(+). The catalysed reaction is D-glycero-beta-D-manno-heptose 1-phosphate + ATP + H(+) = ADP-D-glycero-beta-D-manno-heptose + diphosphate. It functions in the pathway nucleotide-sugar biosynthesis; ADP-L-glycero-beta-D-manno-heptose biosynthesis; ADP-L-glycero-beta-D-manno-heptose from D-glycero-beta-D-manno-heptose 7-phosphate: step 1/4. Its pathway is nucleotide-sugar biosynthesis; ADP-L-glycero-beta-D-manno-heptose biosynthesis; ADP-L-glycero-beta-D-manno-heptose from D-glycero-beta-D-manno-heptose 7-phosphate: step 3/4. Catalyzes the phosphorylation of D-glycero-D-manno-heptose 7-phosphate at the C-1 position to selectively form D-glycero-beta-D-manno-heptose-1,7-bisphosphate. Functionally, catalyzes the ADP transfer from ATP to D-glycero-beta-D-manno-heptose 1-phosphate, yielding ADP-D-glycero-beta-D-manno-heptose. This Yersinia enterocolitica serotype O:8 / biotype 1B (strain NCTC 13174 / 8081) protein is Bifunctional protein HldE.